Here is a 435-residue protein sequence, read N- to C-terminus: Keratin, type I cytoskeletal 18 (435 aa).

The segment at 2 to 84 is head; sequence SYRPGSYSVS…SVSGSGLVGN (83 aa). The segment at 85–120 is coil 1A; the sequence is EKETMIGLNDRLAAYLETVRNLEQANSKLEFQIREA. The region spanning 85-396 is the IF rod domain; it reads EKETMIGLND…RLLDGEDFRL (312 aa). The tract at residues 121-137 is linker 1; it reads LEKKGPTTRDLSPFEKT. The segment at 138-229 is coil 1B; that stretch reads LEDLRKKVYD…QNHNQEVNDL (92 aa). The segment at 230 to 253 is linker 12; it reads RNQIAQSGVQVDVDAPKGQDLAQV. The interval 254 to 391 is coil 2; it reads LAEVRAQYES…IATYRRLLDG (138 aa). The interval 392 to 435 is tail; sequence EDFRLQDALVDQSSTKSIKKVTVTQTLVDGKVVSESTNTKEIGK.

The protein belongs to the intermediate filament family. As to quaternary structure, heterotetramer of two type I and two type II keratins. Keratin-18 associates with keratin-8. Post-translationally, phosphorylated. In terms of processing, proteolytically cleaved by caspases during epithelial cell apoptosis.

Its function is as follows. When phosphorylated, plays a role in filament reorganization. The polypeptide is Keratin, type I cytoskeletal 18 (Acipenser baerii (Siberian sturgeon)).